Reading from the N-terminus, the 546-residue chain is Chaperonin GroEL 1 (546 aa).

Residues 29 to 32 (TLGP), 86 to 90 (DGTTT), G414, and D499 contribute to the ATP site.

The protein belongs to the chaperonin (HSP60) family. Forms a cylinder of 14 subunits composed of two heptameric rings stacked back-to-back. Interacts with the co-chaperonin GroES.

The protein resides in the cytoplasm. The catalysed reaction is ATP + H2O + a folded polypeptide = ADP + phosphate + an unfolded polypeptide.. Functionally, together with its co-chaperonin GroES, plays an essential role in assisting protein folding. The GroEL-GroES system forms a nano-cage that allows encapsulation of the non-native substrate proteins and provides a physical environment optimized to promote and accelerate protein folding. The sequence is that of Chaperonin GroEL 1 from Roseiflexus sp. (strain RS-1).